Reading from the N-terminus, the 316-residue chain is L-lactate dehydrogenase (316 aa).

NAD(+) is bound by residues V15, D37, K42, Y68, and 82–83 (GL). Substrate-binding positions include Q85, R91, and 123–126 (NPVD). Residues 121 to 123 (ASN) and T146 each bind NAD(+). 151-154 (DTSR) lines the substrate pocket. The beta-D-fructose 1,6-bisphosphate site is built by R156 and H171. The active-site Proton acceptor is the H178. Y222 carries the post-translational modification Phosphotyrosine. T231 is a substrate binding site.

This sequence belongs to the LDH/MDH superfamily. LDH family. In terms of assembly, homotetramer.

It localises to the cytoplasm. The enzyme catalyses (S)-lactate + NAD(+) = pyruvate + NADH + H(+). Its pathway is fermentation; pyruvate fermentation to lactate; (S)-lactate from pyruvate: step 1/1. Its activity is regulated as follows. Allosterically activated by fructose 1,6-bisphosphate (FBP). Its function is as follows. Catalyzes the conversion of lactate to pyruvate. The sequence is that of L-lactate dehydrogenase from Borrelia hermsii (strain HS1 / DAH).